Reading from the N-terminus, the 204-residue chain is Ribonuclease HII (204 aa).

In terms of domain architecture, RNase H type-2 spans 1–197; it reads MILGIDEAGR…KNCILNPKLL (197 aa). A divalent metal cation contacts are provided by aspartate 6, glutamate 7, and aspartate 103.

The protein belongs to the RNase HII family. It depends on Mn(2+) as a cofactor. Requires Mg(2+) as cofactor.

It is found in the cytoplasm. It carries out the reaction Endonucleolytic cleavage to 5'-phosphomonoester.. In terms of biological role, endonuclease that specifically degrades the RNA of RNA-DNA hybrids. The chain is Ribonuclease HII from Helicobacter pylori (strain P12).